A 175-amino-acid polypeptide reads, in one-letter code: Shikimate kinase (175 aa).

12-17 is a binding site for ATP; the sequence is GAGKTT. A Mg(2+)-binding site is contributed by Thr16. Substrate-binding residues include Asp34, Arg58, and Gly80. Arg117 serves as a coordination point for ATP. Substrate is bound at residue Arg136.

Belongs to the shikimate kinase family. In terms of assembly, monomer. Mg(2+) serves as cofactor.

The protein localises to the cytoplasm. The enzyme catalyses shikimate + ATP = 3-phosphoshikimate + ADP + H(+). The protein operates within metabolic intermediate biosynthesis; chorismate biosynthesis; chorismate from D-erythrose 4-phosphate and phosphoenolpyruvate: step 5/7. Its function is as follows. Catalyzes the specific phosphorylation of the 3-hydroxyl group of shikimic acid using ATP as a cosubstrate. This Saccharopolyspora erythraea (strain ATCC 11635 / DSM 40517 / JCM 4748 / NBRC 13426 / NCIMB 8594 / NRRL 2338) protein is Shikimate kinase.